A 436-amino-acid chain; its full sequence is UPF0597 protein YhaM (436 aa).

The protein belongs to the UPF0597 family.

This Shigella boydii serotype 4 (strain Sb227) protein is UPF0597 protein YhaM.